Reading from the N-terminus, the 91-residue chain is ITCGQVSSSLAPCINYLRAGGVVPANCCNGVRSLNNAAKTTADRQAACNCLKSAFNSIKGLNLNLAAGLPGKCGVSVPYKISPSTDCKSVK.

Cystine bridges form between cysteine 3/cysteine 50, cysteine 13/cysteine 27, cysteine 28/cysteine 73, and cysteine 48/cysteine 87.

This sequence belongs to the plant LTP family.

Its function is as follows. Plant non-specific lipid-transfer proteins transfer phospholipids as well as galactolipids across membranes. May play a role in wax or cutin deposition in the cell walls of expanding epidermal cells and certain secretory tissues. The protein is Non-specific lipid-transfer protein 1 of Morus nigra (Black mulberry).